The following is a 322-amino-acid chain: 4-hydroxy-3-methylbut-2-enyl diphosphate reductase 1 (322 aa).

Residue Cys-18 coordinates [4Fe-4S] cluster. Residues His-47 and His-82 each contribute to the (2E)-4-hydroxy-3-methylbut-2-enyl diphosphate site. Residues His-47 and His-82 each contribute to the dimethylallyl diphosphate site. Residues His-47 and His-82 each coordinate isopentenyl diphosphate. Residue Cys-104 coordinates [4Fe-4S] cluster. His-132 is a binding site for (2E)-4-hydroxy-3-methylbut-2-enyl diphosphate. Position 132 (His-132) interacts with dimethylallyl diphosphate. His-132 is a binding site for isopentenyl diphosphate. Residue Glu-134 is the Proton donor of the active site. Position 173 (Thr-173) interacts with (2E)-4-hydroxy-3-methylbut-2-enyl diphosphate. Residue Cys-203 coordinates [4Fe-4S] cluster. The (2E)-4-hydroxy-3-methylbut-2-enyl diphosphate site is built by Ser-231, Ser-232, Asn-233, and Ser-276. The dimethylallyl diphosphate site is built by Ser-231, Ser-232, Asn-233, and Ser-276. Isopentenyl diphosphate-binding residues include Ser-231, Ser-232, Asn-233, and Ser-276.

The protein belongs to the IspH family. [4Fe-4S] cluster serves as cofactor.

It catalyses the reaction isopentenyl diphosphate + 2 oxidized [2Fe-2S]-[ferredoxin] + H2O = (2E)-4-hydroxy-3-methylbut-2-enyl diphosphate + 2 reduced [2Fe-2S]-[ferredoxin] + 2 H(+). The catalysed reaction is dimethylallyl diphosphate + 2 oxidized [2Fe-2S]-[ferredoxin] + H2O = (2E)-4-hydroxy-3-methylbut-2-enyl diphosphate + 2 reduced [2Fe-2S]-[ferredoxin] + 2 H(+). The protein operates within isoprenoid biosynthesis; dimethylallyl diphosphate biosynthesis; dimethylallyl diphosphate from (2E)-4-hydroxy-3-methylbutenyl diphosphate: step 1/1. Its pathway is isoprenoid biosynthesis; isopentenyl diphosphate biosynthesis via DXP pathway; isopentenyl diphosphate from 1-deoxy-D-xylulose 5-phosphate: step 6/6. Its function is as follows. Catalyzes the conversion of 1-hydroxy-2-methyl-2-(E)-butenyl 4-diphosphate (HMBPP) into a mixture of isopentenyl diphosphate (IPP) and dimethylallyl diphosphate (DMAPP). Acts in the terminal step of the DOXP/MEP pathway for isoprenoid precursor biosynthesis. This is 4-hydroxy-3-methylbut-2-enyl diphosphate reductase 1 from Bradyrhizobium diazoefficiens (strain JCM 10833 / BCRC 13528 / IAM 13628 / NBRC 14792 / USDA 110).